The sequence spans 133 residues: Holo-[acyl-carrier-protein] synthase (133 aa).

The Mg(2+) site is built by D8 and E57.

Belongs to the P-Pant transferase superfamily. AcpS family. Requires Mg(2+) as cofactor.

It is found in the cytoplasm. It carries out the reaction apo-[ACP] + CoA = holo-[ACP] + adenosine 3',5'-bisphosphate + H(+). Transfers the 4'-phosphopantetheine moiety from coenzyme A to a Ser of acyl-carrier-protein. The chain is Holo-[acyl-carrier-protein] synthase from Chelativorans sp. (strain BNC1).